The sequence spans 141 residues: Large ribosomal subunit protein uL11 (141 aa).

The protein belongs to the universal ribosomal protein uL11 family. In terms of assembly, part of the ribosomal stalk of the 50S ribosomal subunit. Interacts with L10 and the large rRNA to form the base of the stalk. L10 forms an elongated spine to which L12 dimers bind in a sequential fashion forming a multimeric L10(L12)X complex. In terms of processing, one or more lysine residues are methylated.

Its function is as follows. Forms part of the ribosomal stalk which helps the ribosome interact with GTP-bound translation factors. The protein is Large ribosomal subunit protein uL11 of Bacillus cereus (strain ATCC 10987 / NRS 248).